A 1760-amino-acid chain; its full sequence is Chitin synthase A (1760 aa).

Asn157 is a glycosylation site (N-linked (GlcNAc...) asparagine). 2 helical membrane-spanning segments follow: residues 729–749 (IWTG…LRFV) and 765–785 (LVLV…IIAF). Asn876 and Asn996 each carry an N-linked (GlcNAc...) asparagine glycan. A helical transmembrane segment spans residues 1027–1047 (ILLAFTCLICAVILVKFLAAL). N-linked (GlcNAc...) asparagine glycosylation is present at Asn1392. 3 helical membrane-spanning segments follow: residues 1417-1437 (FVVL…VYLG), 1449-1469 (IPII…IIFI), and 1477-1497 (IGWM…LPMY). 3 N-linked (GlcNAc...) asparagine glycosylation sites follow: Asn1557, Asn1645, and Asn1650. Residues 1670-1691 (DNLLGVPRPNSRSPVGGYTSRP) form a disordered region. The DEK-C domain maps to 1702–1758 (GPDEMAITDAIRSCLAEVDLDTVTKKQVRALVEQRLQATLTGDKRAFLDRQIDQELA).

Belongs to the chitin synthase family. Class V subfamily.

The protein resides in the cell membrane. The enzyme catalyses [(1-&gt;4)-N-acetyl-beta-D-glucosaminyl](n) + UDP-N-acetyl-alpha-D-glucosamine = [(1-&gt;4)-N-acetyl-beta-D-glucosaminyl](n+1) + UDP + H(+). In terms of biological role, polymerizes chitin, a structural polymer of the cell wall and septum, by transferring the sugar moiety of UDP-GlcNAc to the non-reducing end of the growing chitin polymer. Plays an important role in cell-wall formation during both hyphal growth and conidiation. This is Chitin synthase A from Aspergillus oryzae (strain ATCC 42149 / RIB 40) (Yellow koji mold).